A 341-amino-acid polypeptide reads, in one-letter code: Glycerol-3-phosphate dehydrogenase [NAD(P)+] (341 aa).

NADPH is bound by residues Ser-14, Phe-15, Arg-35, and Lys-108. Sn-glycerol 3-phosphate contacts are provided by Lys-108 and Gly-136. Ser-140 lines the NADPH pocket. Lys-191, Asp-244, Ser-254, Arg-255, and Asn-256 together coordinate sn-glycerol 3-phosphate. The active-site Proton acceptor is Lys-191. NADPH is bound at residue Arg-255. Positions 279 and 281 each coordinate NADPH.

It belongs to the NAD-dependent glycerol-3-phosphate dehydrogenase family.

Its subcellular location is the cytoplasm. It carries out the reaction sn-glycerol 3-phosphate + NAD(+) = dihydroxyacetone phosphate + NADH + H(+). The enzyme catalyses sn-glycerol 3-phosphate + NADP(+) = dihydroxyacetone phosphate + NADPH + H(+). It participates in membrane lipid metabolism; glycerophospholipid metabolism. Catalyzes the reduction of the glycolytic intermediate dihydroxyacetone phosphate (DHAP) to sn-glycerol 3-phosphate (G3P), the key precursor for phospholipid synthesis. This chain is Glycerol-3-phosphate dehydrogenase [NAD(P)+], found in Pseudomonas putida (strain GB-1).